Reading from the N-terminus, the 327-residue chain is Phenylalanine--tRNA ligase alpha subunit (327 aa).

Glu-252 serves as a coordination point for Mg(2+).

The protein belongs to the class-II aminoacyl-tRNA synthetase family. Phe-tRNA synthetase alpha subunit type 1 subfamily. As to quaternary structure, tetramer of two alpha and two beta subunits. The cofactor is Mg(2+).

It localises to the cytoplasm. It carries out the reaction tRNA(Phe) + L-phenylalanine + ATP = L-phenylalanyl-tRNA(Phe) + AMP + diphosphate + H(+). The sequence is that of Phenylalanine--tRNA ligase alpha subunit from Tolumonas auensis (strain DSM 9187 / NBRC 110442 / TA 4).